The sequence spans 306 residues: Heterogeneous nuclear ribonucleoproteins C1/C2 (306 aa).

The residue at position 2 (Ala-2) is an N-acetylalanine. Residues Lys-8, Lys-50, Lys-89, and Lys-94 each participate in a glycyl lysine isopeptide (Lys-Gly) (interchain with G-Cter in SUMO2) cross-link. Residues 16 to 87 (SRVFIGNLNT…QVLDINLAAE (72 aa)) form the RRM domain. Phosphoserine is present on residues Ser-107 and Val-108. The residue at position 109 (Thr-109) is a Phosphothreonine. Residues Ser-113, Ser-115, and Ser-121 each carry the phosphoserine modification. Disordered stretches follow at residues 139-190 (YPAR…KLKG) and 221-306 (QSKQ…EDDS). The Nuclear localization signal motif lies at 155 to 161 (PSKRQRV). Ser-162 and Ser-166 each carry phosphoserine. The span at 175–185 (SKSGQRGSSKS) shows a compositional bias: low complexity. Lys-176 bears the N6-acetyllysine; alternate mark. Residue Lys-176 forms a Glycyl lysine isopeptide (Lys-Gly) (interchain with G-Cter in SUMO2); alternate linkage. Residues 190-238 (GDDLQAIKKELTQIKQKVDSLLENLEKIEKEQSKQAVEMKNDKSEEEQS) are a coiled coil. Positions 221-232 (QSKQAVEMKNDK) are enriched in basic and acidic residues. Residues Lys-223 and Lys-229 each participate in a glycyl lysine isopeptide (Lys-Gly) (interchain with G-Cter in SUMO2) cross-link. Residue Lys-232 forms a Glycyl lysine isopeptide (Lys-Gly) (interchain with G-Cter in SUMO2); alternate linkage. Lys-232 participates in a covalent cross-link: Glycyl lysine isopeptide (Lys-Gly) (interchain with G-Cter in SUMO1); alternate. Residues Ser-233, Ser-238, Ser-239, and Ser-241 each carry the phosphoserine modification. Residues 242 to 253 (VKKDETNVKMES) show a composition bias toward basic and acidic residues. Glycyl lysine isopeptide (Lys-Gly) (interchain with G-Cter in SUMO2) cross-links involve residues Lys-243 and Lys-244. Lys-250 participates in a covalent cross-link: Glycyl lysine isopeptide (Lys-Gly) (interchain with G-Cter in SUMO2); alternate. Lys-250 is covalently cross-linked (Glycyl lysine isopeptide (Lys-Gly) (interchain with G-Cter in SUMO); alternate). Phosphoserine is present on residues Ser-253 and Ser-260. The span at 255-276 (GGADDSAEEGDLLDDDDNEDRG) shows a compositional bias: acidic residues. The span at 277–287 (DDQLELIKDDE) shows a compositional bias: basic and acidic residues. Residues 288–306 (KEAEEGEDDRDSANGEDDS) show a composition bias toward acidic residues. A phosphoserine mark is found at Ser-299 and Ser-306.

It belongs to the RRM HNRPC family. RALY subfamily. As to quaternary structure, tetramer composed of 3 copies of isoform C1 and 1 copy of isoform C2. Assembly of 3 tetramers with bound pre-mRNA gives rise to a 19S complex that interacts with HNRNPA2B1 tetramers. Component of the 40S hnRNP particle. Identified in the spliceosome C complex. Interacts with IGF2BP1. Interacts with DHX9; this interaction is direct, enhanced probably by their concomitant binding to RNA and mediates the attachment to actin filaments. Interacts with PPIA/CYPA. Interacts with YWHAE. Phosphorylated on Ser-260 and Ser-299 in resting cells. Phosphorylated on Ser-253 and on 1 serine residue in the poly-Ser stretch at position 238 in response to hydrogen peroxide. In terms of processing, sumoylated. Sumoylation reduces affinity for mRNA. Post-translationally, ubiquitinated and degraded after nucleo-cytoplasmic transport by YWHAE.

Its subcellular location is the nucleus. In terms of biological role, binds pre-mRNA and nucleates the assembly of 40S hnRNP particles. Interacts with poly-U tracts in the 3'-UTR or 5'-UTR of mRNA and modulates the stability and the level of translation of bound mRNA molecules. Single HNRNPC tetramers bind 230-240 nucleotides. Trimers of HNRNPC tetramers bind 700 nucleotides. May play a role in the early steps of spliceosome assembly and pre-mRNA splicing. N6-methyladenosine (m6A) has been shown to alter the local structure in mRNAs and long non-coding RNAs (lncRNAs) via a mechanism named 'm(6)A-switch', facilitating binding of HNRNPC, leading to regulation of mRNA splicing. In Homo sapiens (Human), this protein is Heterogeneous nuclear ribonucleoproteins C1/C2 (HNRNPC).